Here is a 129-residue protein sequence, read N- to C-terminus: Fluoride-specific ion channel FluC 2 (129 aa).

4 helical membrane passes run 4-24 (LDVM…WWIG), 39-59 (TFLI…LFGV), 65-85 (YGTM…TTFS), and 100-120 (GGLA…AAWL). Residues Gly-79 and Thr-82 each contribute to the Na(+) site.

It belongs to the fluoride channel Fluc/FEX (TC 1.A.43) family.

Its subcellular location is the cell inner membrane. The catalysed reaction is fluoride(in) = fluoride(out). With respect to regulation, na(+) is not transported, but it plays an essential structural role and its presence is essential for fluoride channel function. In terms of biological role, fluoride-specific ion channel. Important for reducing fluoride concentration in the cell, thus reducing its toxicity. This Brucella suis biovar 1 (strain 1330) protein is Fluoride-specific ion channel FluC 2.